Consider the following 513-residue polypeptide: Zinc finger CCCH-type with G patch domain-containing protein (513 aa).

Residues 155-178 (PCSYYLEGECRFDEAKCRFSHGAL) form a C3H1-type zinc finger. Residues 252–261 (DQDEDDELSS) show a composition bias toward acidic residues. The tract at residues 252–283 (DQDEDDELSSEESNSSMNDNSSDEAESDMDDL) is disordered. The span at 262-271 (EESNSSMNDN) shows a compositional bias: low complexity. The span at 272–283 (SSDEAESDMDDL) shows a compositional bias: acidic residues. The G-patch domain occupies 312–358 (TRGIGSKLMEKMGYIHGTGLGSDGRGIVTPVSAQILPQGRSLDACME). The segment covering 478-495 (VQMQSHKQELATLQAQER) has biased composition (polar residues). Residues 478-513 (VQMQSHKQELATLQAQERSLSKEQQTRKSKNKMFEF) form a disordered region. Basic and acidic residues predominate over residues 496-513 (SLSKEQQTRKSKNKMFEF).

The protein resides in the nucleus. Its function is as follows. Transcription repressor. The protein is Zinc finger CCCH-type with G patch domain-containing protein of Drosophila melanogaster (Fruit fly).